A 733-amino-acid polypeptide reads, in one-letter code: Ferric aerobactin receptor (733 aa).

Residues 1–25 (MMISKKYTLWALNPLLLTMMAPAVA) form the signal peptide. The short motif at 31–38 (ETFVVSAN) is the TonB box element. The 111-residue stretch at 43-153 (TVAEMAQTTW…TGGLINIVTK (111 aa)) folds into the TBDR plug domain. The region spanning 158–733 (ETIMEFEAGT…TFGLNYSVLF (576 aa)) is the TBDR beta-barrel domain. A TonB C-terminal box motif is present at residues 716 to 733 (YDYKGRGRTFGLNYSVLF).

Belongs to the TonB-dependent receptor family.

The protein localises to the cell outer membrane. In terms of biological role, receptor for aerobactin. The polypeptide is Ferric aerobactin receptor (iutA) (Klebsiella pneumoniae).